A 401-amino-acid chain; its full sequence is Imidazolonepropionase (401 aa).

Residues histidine 70 and histidine 72 each contribute to the Fe(3+) site. Residues histidine 70 and histidine 72 each contribute to the Zn(2+) site. 4-imidazolone-5-propanoate-binding residues include arginine 79, tyrosine 142, and histidine 175. Tyrosine 142 is a binding site for N-formimidoyl-L-glutamate. Histidine 240 contacts Fe(3+). Histidine 240 lines the Zn(2+) pocket. Glutamine 243 provides a ligand contact to 4-imidazolone-5-propanoate. Aspartate 315 is a binding site for Fe(3+). Aspartate 315 lines the Zn(2+) pocket. The N-formimidoyl-L-glutamate site is built by asparagine 317 and glycine 319. 4-imidazolone-5-propanoate is bound at residue threonine 320.

It belongs to the metallo-dependent hydrolases superfamily. HutI family. It depends on Zn(2+) as a cofactor. Fe(3+) is required as a cofactor.

It is found in the cytoplasm. It carries out the reaction 4-imidazolone-5-propanoate + H2O = N-formimidoyl-L-glutamate. It functions in the pathway amino-acid degradation; L-histidine degradation into L-glutamate; N-formimidoyl-L-glutamate from L-histidine: step 3/3. Functionally, catalyzes the hydrolytic cleavage of the carbon-nitrogen bond in imidazolone-5-propanoate to yield N-formimidoyl-L-glutamate. It is the third step in the universal histidine degradation pathway. The polypeptide is Imidazolonepropionase (Caulobacter sp. (strain K31)).